The sequence spans 512 residues: Lysine--tRNA ligase (512 aa).

The Mg(2+) site is built by Glu-408 and Glu-415.

Belongs to the class-II aminoacyl-tRNA synthetase family. Homodimer. It depends on Mg(2+) as a cofactor.

It is found in the cytoplasm. The catalysed reaction is tRNA(Lys) + L-lysine + ATP = L-lysyl-tRNA(Lys) + AMP + diphosphate. The polypeptide is Lysine--tRNA ligase (Prochlorococcus marinus (strain MIT 9312)).